A 753-amino-acid polypeptide reads, in one-letter code: 5-methyltetrahydropteroyltriglutamate--homocysteine methyltransferase (753 aa).

5-methyltetrahydropteroyltri-L-glutamate contacts are provided by residues 17-20 (RELK) and Lys-117. L-homocysteine-binding positions include 431–433 (IGS) and Glu-484. L-methionine is bound by residues 431–433 (IGS) and Glu-484. Residues 515–516 (RC) and Trp-561 contribute to the 5-methyltetrahydropteroyltri-L-glutamate site. An L-homocysteine-binding site is contributed by Asp-599. Asp-599 is a binding site for L-methionine. Glu-605 is a binding site for 5-methyltetrahydropteroyltri-L-glutamate. Residues His-641, Cys-643, and Glu-665 each coordinate Zn(2+). His-694 acts as the Proton donor in catalysis. Cys-726 contacts Zn(2+).

Belongs to the vitamin-B12 independent methionine synthase family. Zn(2+) is required as a cofactor.

The catalysed reaction is 5-methyltetrahydropteroyltri-L-glutamate + L-homocysteine = tetrahydropteroyltri-L-glutamate + L-methionine. It participates in amino-acid biosynthesis; L-methionine biosynthesis via de novo pathway; L-methionine from L-homocysteine (MetE route): step 1/1. Its function is as follows. Catalyzes the transfer of a methyl group from 5-methyltetrahydrofolate to homocysteine resulting in methionine formation. The sequence is that of 5-methyltetrahydropteroyltriglutamate--homocysteine methyltransferase from Shigella flexneri.